We begin with the raw amino-acid sequence, 883 residues long: Phosphoenolpyruvate carboxylase (883 aa).

Catalysis depends on residues His-138 and Lys-546.

This sequence belongs to the PEPCase type 1 family. Mg(2+) serves as cofactor.

It carries out the reaction oxaloacetate + phosphate = phosphoenolpyruvate + hydrogencarbonate. Forms oxaloacetate, a four-carbon dicarboxylic acid source for the tricarboxylic acid cycle. In Escherichia coli O81 (strain ED1a), this protein is Phosphoenolpyruvate carboxylase.